Reading from the N-terminus, the 430-residue chain is MSNQDYKVADISLADWGRKEIKIAESEMPGLMETRREFAAQKPLKGARIAGCLHMTIQTAVLIETLQELGAEVRWSSCNIFSTQDQAAAAVAANGTPVFAWKGETEEEYWWCIEQTINGPDGWKPNMLLDDGGDLTAVIHEQYPDMMKDIYGVSEETTTGVHRLYEMSRKGELGMPAFNVNDSVTKSKFDNLYGCRESLVDSIKRATDVMIAGKVAVVAGFGDVGKGSAQSLRGLGAQVWVTEVDPICALQASMDGYKVVTMEEAAPVADIFVTATGNYNVITHDHMKAMKDEAIVCNIGHFDNEIDVASLKQYKWDEIKPQVDHVEFPDGKKITLLAEGRLVNLGCATGHPSFVMSNSFTNQVMAQMELYNNPGKYEKDVYVLPKHLDEKVAALHLGRVGANLTRLSEEQAGYIGVSVDGPFKPEWYRY.

Positions 56, 131, and 156 each coordinate substrate. Residue 157–159 (TTT) coordinates NAD(+). Substrate is bound by residues Lys-186 and Asp-190. NAD(+) is bound by residues Asn-191, 220-225 (GFGDVG), Glu-243, Asn-278, 299-301 (IGH), and Asn-344.

Belongs to the adenosylhomocysteinase family. NAD(+) is required as a cofactor.

The protein resides in the cytoplasm. The enzyme catalyses S-adenosyl-L-homocysteine + H2O = L-homocysteine + adenosine. The protein operates within amino-acid biosynthesis; L-homocysteine biosynthesis; L-homocysteine from S-adenosyl-L-homocysteine: step 1/1. May play a key role in the regulation of the intracellular concentration of adenosylhomocysteine. This Halorhodospira halophila (strain DSM 244 / SL1) (Ectothiorhodospira halophila (strain DSM 244 / SL1)) protein is Adenosylhomocysteinase.